Here is an 861-residue protein sequence, read N- to C-terminus: Envelope glycoprotein gp160 (861 aa).

Positions 1–32 (MRVKEKYQHLWRWGWKWGTMLLGILMICSATE) are cleaved as a signal peptide. The Extracellular segment spans residues 33 to 689 (KLWVTVYYGV…ITNWLWYIKI (657 aa)). Cys-54 and Cys-74 are disulfide-bonded. N-linked (GlcNAc...) asparagine; by host glycans are attached at residues Asn-88, Asn-136, Asn-141, Asn-146, Asn-161, and Asn-165. 5 disulfide bridges follow: Cys-119/Cys-210, Cys-126/Cys-201, Cys-131/Cys-162, Cys-223/Cys-252, and Cys-233/Cys-244. The interval 131-161 (CTDLGNATNTNSSNTNSSSGEMMMEKGEIKN) is V1. Residues 162 to 201 (CSFNISTSIRGKVQKEYAFFYKLDIIPIDNDTTSYTLTSC) form a V2 region. Residues 184–186 (LDI) carry the Putative binding site to alpha-4/beta-7 integrin motif. Residues Asn-191, Asn-202, Asn-235, Asn-239, Asn-246, Asn-267, Asn-281, Asn-294, Asn-300, Asn-306, Asn-337, Asn-344, and Asn-361 are each glycosylated (N-linked (GlcNAc...) asparagine; by host). A V3 region spans residues 301-335 (CTRPNNNTRKSIRIQRGPGRAFVTIGKIGNMRQAH). Cysteines 301 and 336 form a disulfide. Positions 369–379 (SSGGDPEIVTH) are CD4-binding loop. 2 disulfide bridges follow: Cys-383–Cys-450 and Cys-390–Cys-423. Residues 390 to 423 (CNSTQLFNSTWFNSTWSTEGSNNTEGSDTITLPC) form a V4 region. N-linked (GlcNAc...) asparagine; by host glycans are attached at residues Asn-391, Asn-397, Asn-402, Asn-411, Asn-453, and Asn-468. V5 regions lie at residues 466-476 (NNNGSEIFRPG) and 468-476 (NGSEIFRPG). A fusion peptide region spans residues 517-537 (AVGIGALFLGFLGAAGSTMGA). The interval 579-597 (KQLQARILAVERYLKDQQL) is immunosuppression. A disulfide bridge links Cys-603 with Cys-609. N-linked (GlcNAc...) asparagine; by host glycosylation is found at Asn-616, Asn-621, Asn-630, Asn-642, and Asn-679. A coiled-coil region spans residues 638 to 672 (REINNYTSLIHSLIEESQNQQEKNEQELLELDKWA). An MPER; binding to GalCer region spans residues 667–688 (ELDKWASLWNWFNITNWLWYIK). Residues 690-710 (FIMIVGGLVGLRIVFAVLSIV) traverse the membrane as a helical segment. The Cytoplasmic segment spans residues 711–861 (NRVRQGYSPL…IRQGLERILL (151 aa)). The YXXL motif; contains endocytosis signal motif lies at 717–720 (YSPL). Positions 723–747 (QTHLPTPRGPDRPEGIEEEGGERDR) are disordered. S-palmitoyl cysteine; by host attachment occurs at residues Cys-769 and Cys-842. A Di-leucine internalization motif motif is present at residues 860–861 (LL).

Belongs to the HIV-1 env protein family. As to quaternary structure, the mature envelope protein (Env) consists of a homotrimer of non-covalently associated gp120-gp41 heterodimers. The resulting complex protrudes from the virus surface as a spike. There seems to be as few as 10 spikes on the average virion. Interacts with host CD4, CCR5 and CXCR4. Gp120 also interacts with the C-type lectins CD209/DC-SIGN and CLEC4M/DC-SIGNR (collectively referred to as DC-SIGN(R)). Gp120 and gp41 interact with GalCer. Gp120 interacts with host ITGA4/ITGB7 complex; on CD4+ T-cells, this interaction results in rapid activation of integrin ITGAL/LFA-1, which facilitates efficient cell-to-cell spreading of HIV-1. Gp120 interacts with cell-associated heparan sulfate; this interaction increases virus infectivity on permissive cells and may be involved in infection of CD4- cells. In terms of assembly, the mature envelope protein (Env) consists of a homotrimer of non-covalently associated gp120-gp41 heterodimers. The resulting complex protrudes from the virus surface as a spike. There seems to be as few as 10 spikes on the average virion. Highly glycosylated by host. The high number of glycan on the protein is reffered to as 'glycan shield' because it contributes to hide protein sequence from adaptive immune system. Post-translationally, palmitoylation of the transmembrane protein and of Env polyprotein (prior to its proteolytic cleavage) is essential for their association with host cell membrane lipid rafts. Palmitoylation is therefore required for envelope trafficking to classical lipid rafts, but not for viral replication. In terms of processing, specific enzymatic cleavages in vivo yield mature proteins. Envelope glycoproteins are synthesized as an inactive precursor that is heavily N-glycosylated and processed likely by host cell furin in the Golgi to yield the mature SU and TM proteins. The cleavage site between SU and TM requires the minimal sequence [KR]-X-[KR]-R. About 2 of the 9 disulfide bonds of gp41 are reduced by P4HB/PDI, following binding to CD4 receptor.

It localises to the virion membrane. The protein localises to the host cell membrane. The protein resides in the host endosome membrane. Oligomerizes in the host endoplasmic reticulum into predominantly trimers. In a second time, gp160 transits in the host Golgi, where glycosylation is completed. The precursor is then proteolytically cleaved in the trans-Golgi and thereby activated by cellular furin or furin-like proteases to produce gp120 and gp41. Its function is as follows. Attaches the virus to the host lymphoid cell by binding to the primary receptor CD4. This interaction induces a structural rearrangement creating a high affinity binding site for a chemokine coreceptor like CXCR4 and/or CCR5. Acts as a ligand for CD209/DC-SIGN and CLEC4M/DC-SIGNR, which are respectively found on dendritic cells (DCs), and on endothelial cells of liver sinusoids and lymph node sinuses. These interactions allow capture of viral particles at mucosal surfaces by these cells and subsequent transmission to permissive cells. HIV subverts the migration properties of dendritic cells to gain access to CD4+ T-cells in lymph nodes. Virus transmission to permissive T-cells occurs either in trans (without DCs infection, through viral capture and transmission), or in cis (following DCs productive infection, through the usual CD4-gp120 interaction), thereby inducing a robust infection. In trans infection, bound virions remain infectious over days and it is proposed that they are not degraded, but protected in non-lysosomal acidic organelles within the DCs close to the cell membrane thus contributing to the viral infectious potential during DCs' migration from the periphery to the lymphoid tissues. On arrival at lymphoid tissues, intact virions recycle back to DCs' cell surface allowing virus transmission to CD4+ T-cells. In terms of biological role, acts as a class I viral fusion protein. Under the current model, the protein has at least 3 conformational states: pre-fusion native state, pre-hairpin intermediate state, and post-fusion hairpin state. During fusion of viral and target intracellular membranes, the coiled coil regions (heptad repeats) assume a trimer-of-hairpins structure, positioning the fusion peptide in close proximity to the C-terminal region of the ectodomain. The formation of this structure appears to drive apposition and subsequent fusion of viral and target cell membranes. Complete fusion occurs in host cell endosomes and is dynamin-dependent, however some lipid transfer might occur at the plasma membrane. The virus undergoes clathrin-dependent internalization long before endosomal fusion, thus minimizing the surface exposure of conserved viral epitopes during fusion and reducing the efficacy of inhibitors targeting these epitopes. Membranes fusion leads to delivery of the nucleocapsid into the cytoplasm. This Homo sapiens (Human) protein is Envelope glycoprotein gp160.